The primary structure comprises 279 residues: Reaction center protein L chain (279 aa).

3 helical membrane-spanning segments follow: residues 33–56 (GFFG…GASQ), 85–113 (GLWQ…RKLG), and 116–141 (YHVP…ILMG). 2 residues coordinate (7R,8Z)-bacteriochlorophyll b: H154 and H174. Residues 171–200 (NPAHMLAITFFFTTTLAMSMHGGLILSAAN) traverse the membrane as a helical segment. Position 191 (H191) interacts with Fe cation. F217 provides a ligand contact to a ubiquinone. Residues 226 to 252 (GSLGIHRLGLFLALSAAFWSAVCIVIS) form a helical membrane-spanning segment. H231 contributes to the Fe cation binding site.

Belongs to the reaction center PufL/M/PsbA/D family. As to quaternary structure, reaction center is composed of four bacteriochlorophylls, two bacteriopheophytins, two ubiquinones, one iron, and three highly hydrophobic polypeptide chains (designated L, M, and H).

It localises to the cell inner membrane. The reaction center is a membrane-bound complex that mediates the initial photochemical event in the electron transfer process of photosynthesis. The protein is Reaction center protein L chain (pufL) of Rubrivivax gelatinosus (Rhodocyclus gelatinosus).